Here is a 427-residue protein sequence, read N- to C-terminus: Serine--tRNA ligase (427 aa).

231–233 contributes to the L-serine binding site; it reads TAE. 262–264 lines the ATP pocket; the sequence is RSE. Glutamate 285 is an L-serine binding site. 349–352 provides a ligand contact to ATP; sequence EISS. Serine 385 contacts L-serine.

This sequence belongs to the class-II aminoacyl-tRNA synthetase family. Type-1 seryl-tRNA synthetase subfamily. Homodimer. The tRNA molecule binds across the dimer.

The protein localises to the cytoplasm. It catalyses the reaction tRNA(Ser) + L-serine + ATP = L-seryl-tRNA(Ser) + AMP + diphosphate + H(+). The enzyme catalyses tRNA(Sec) + L-serine + ATP = L-seryl-tRNA(Sec) + AMP + diphosphate + H(+). It participates in aminoacyl-tRNA biosynthesis; selenocysteinyl-tRNA(Sec) biosynthesis; L-seryl-tRNA(Sec) from L-serine and tRNA(Sec): step 1/1. Functionally, catalyzes the attachment of serine to tRNA(Ser). Is also able to aminoacylate tRNA(Sec) with serine, to form the misacylated tRNA L-seryl-tRNA(Sec), which will be further converted into selenocysteinyl-tRNA(Sec). The sequence is that of Serine--tRNA ligase from Rhizobium johnstonii (strain DSM 114642 / LMG 32736 / 3841) (Rhizobium leguminosarum bv. viciae).